Reading from the N-terminus, the 206-residue chain is Emopamil-binding protein-like (206 aa).

The next 4 helical transmembrane spans lie at 10–30 (EAGGSLLLCAALLAAGCALGL), 42–62 (GALIWLCYDALVHFALEGPFV), 101–121 (VEILTVALDGSLALFLIYAIV), and 165–185 (CWLYLFFFNGVWVLIPGLLLW). The EXPERA domain occupies 39–184 (ADRGALIWLC…VWVLIPGLLL (146 aa)).

Belongs to the EBP family. In terms of assembly, homodimer. Widely expressed with highest levels in liver, lung and kidney.

The protein localises to the endoplasmic reticulum membrane. Does not possess sterol isomerase activity and does not bind sigma ligands. This chain is Emopamil-binding protein-like (EBPL), found in Homo sapiens (Human).